A 124-amino-acid polypeptide reads, in one-letter code: Ribonuclease pancreatic (124 aa).

The segment covering 1–13 (KESAAAKFERQHM) has biased composition (basic and acidic residues). Residues 1–24 (KESAAAKFERQHMDPSMSSASSSN) form a disordered region. Lys7 and Arg10 together coordinate substrate. The active-site Proton acceptor is His12. Intrachain disulfides connect Cys26–Cys84, Cys40–Cys95, Cys58–Cys110, and Cys65–Cys72. Substrate is bound by residues 41–45 (KPVNT), Lys66, and Arg85. Residue His119 is the Proton donor of the active site.

Belongs to the pancreatic ribonuclease family. As to quaternary structure, monomer. Interacts with and forms tight 1:1 complexes with RNH1. Dimerization of two such complexes may occur. Interaction with RNH1 inhibits this protein. As to expression, pancreas.

It localises to the secreted. The enzyme catalyses an [RNA] containing cytidine + H2O = an [RNA]-3'-cytidine-3'-phosphate + a 5'-hydroxy-ribonucleotide-3'-[RNA].. It catalyses the reaction an [RNA] containing uridine + H2O = an [RNA]-3'-uridine-3'-phosphate + a 5'-hydroxy-ribonucleotide-3'-[RNA].. Endonuclease that catalyzes the cleavage of RNA on the 3' side of pyrimidine nucleotides. Acts on single-stranded and double-stranded RNA. This chain is Ribonuclease pancreatic (RNASE1), found in Dama dama (Fallow deer).